The chain runs to 208 residues: N-(5'-phosphoribosyl)anthranilate isomerase (208 aa).

This sequence belongs to the TrpF family.

It catalyses the reaction N-(5-phospho-beta-D-ribosyl)anthranilate = 1-(2-carboxyphenylamino)-1-deoxy-D-ribulose 5-phosphate. The protein operates within amino-acid biosynthesis; L-tryptophan biosynthesis; L-tryptophan from chorismate: step 3/5. The polypeptide is N-(5'-phosphoribosyl)anthranilate isomerase (Natronomonas pharaonis (strain ATCC 35678 / DSM 2160 / CIP 103997 / JCM 8858 / NBRC 14720 / NCIMB 2260 / Gabara) (Halobacterium pharaonis)).